A 158-amino-acid chain; its full sequence is Protein E6 (158 aa).

Zinc fingers lie at residues 32–68 (CVYC…CQSC) and 105–141 (CMSC…CRHC). Positions 156–158 (TQV) match the PDZ-binding domain motif.

Belongs to the papillomaviridae E6 protein family. As to quaternary structure, forms homodimers. Interacts with ubiquitin-protein ligase UBE3A/E6-AP and thus forms a complex with human TP53. Interacts with human NFX1 and MAGI3. Interacts with human IRF3; this interaction inhibits the establishment of antiviral state. Interacts with human TYK2; this interaction inhibits JAK-STAT activation by interferon alpha. Interacts with host DLG1; this interaction leads to the proteasomal degradation of DLG1.

It is found in the host cytoplasm. The protein localises to the host nucleus. Plays a major role in the induction and maintenance of cellular transformation. Acts mainly as an oncoprotein by stimulating the destruction of many host cell key regulatory proteins. E6 associates with host UBE3A/E6-AP ubiquitin-protein ligase, and inactivates tumor suppressors TP53 and TP73 by targeting them to the 26S proteasome for degradation. In turn, DNA damage and chromosomal instabilities increase and lead to cell proliferation and cancer development. The complex E6/E6AP targets several other substrates to degradation via the proteasome including host DLG1 or NFX1, a repressor of human telomerase reverse transcriptase (hTERT). The resulting increased expression of hTERT prevents the shortening of telomere length leading to cell immortalization. Other cellular targets including BAK1, Fas-associated death domain-containing protein (FADD) and procaspase 8, are degraded by E6/E6AP causing inhibition of apoptosis. E6 also inhibits immune response by interacting with host IRF3 and TYK2. These interactions prevent IRF3 transcriptional activities and inhibit TYK2-mediated JAK-STAT activation by interferon alpha resulting in inhibition of the interferon signaling pathway. The polypeptide is Protein E6 (Homo sapiens (Human)).